The sequence spans 430 residues: Enolase (430 aa).

(2R)-2-phosphoglycerate is bound at residue Q163. Residue E205 is the Proton donor of the active site. D242, E287, and D314 together coordinate Mg(2+). K339, R368, S369, and K390 together coordinate (2R)-2-phosphoglycerate. The Proton acceptor role is filled by K339.

This sequence belongs to the enolase family. Requires Mg(2+) as cofactor.

It localises to the cytoplasm. The protein localises to the secreted. The protein resides in the cell surface. The enzyme catalyses (2R)-2-phosphoglycerate = phosphoenolpyruvate + H2O. Its pathway is carbohydrate degradation; glycolysis; pyruvate from D-glyceraldehyde 3-phosphate: step 4/5. In terms of biological role, catalyzes the reversible conversion of 2-phosphoglycerate (2-PG) into phosphoenolpyruvate (PEP). It is essential for the degradation of carbohydrates via glycolysis. In Bacillus velezensis (strain DSM 23117 / BGSC 10A6 / LMG 26770 / FZB42) (Bacillus amyloliquefaciens subsp. plantarum), this protein is Enolase.